The following is a 708-amino-acid chain: Metabotropic glutamate receptor-like protein L (708 aa).

A signal peptide spans 1 to 24 (MKLIIKNLILLLVSCLYFLSNVSC). Residues Asn21, Asn235, Asn310, and Asn366 are each glycosylated (N-linked (GlcNAc...) asparagine). Residues 25–370 (DQEVHMALLL…TTGSINKTFM (346 aa)) are Extracellular-facing. A helical membrane pass occupies residues 371–391 (AVSILEMAICLIIGIIVIFFF). The Cytoplasmic segment spans residues 392-401 (SRNINIIYST). The chain crosses the membrane as a helical span at residues 402–422 (IPYCLTILLGASLIAVAIFLW). Over 423-435 (NLRDLNTQICTSK) the chain is Extracellular. A helical transmembrane segment spans residues 436–456 (IWMASLGYNVLIGFIIIKSSL). At 457–479 (IYFKFKEMVKSKNEKISPIPFGR) the chain is on the cytoplasmic side. Residues 480-500 (IVLWFVPLLIIDCVLLIIYST) form a helical membrane-spanning segment. At 501–531 (SGNPGKIDSLGLDGIGRYEYTQNCVNNLTGD) the chain is on the extracellular side. Asn527 carries an N-linked (GlcNAc...) asparagine glycan. Residues 532–552 (IILYIILVFHGLQLLYGCVIA) traverse the membrane as a helical segment. The Cytoplasmic segment spans residues 553–568 (WKTRVIDLEEFIEAHD). A helical membrane pass occupies residues 569–589 (FATAIYLITFCSFIIVILMVG). The Extracellular portion of the chain corresponds to 590-597 (VTSTSNRN). Residues 598 to 618 (TIISACAIFSSFSCVLIIFGA) form a helical membrane-spanning segment. The Cytoplasmic segment spans residues 619–708 (KFWKIYKPVE…SSRAAAQNDN (90 aa)). The interval 638 to 681 (KPQKSYSGSGGSGNSSGSKSKKTSAHSSTSGVKSGTSAPTQTSQ) is disordered. Positions 669-681 (VKSGTSAPTQTSQ) are enriched in polar residues.

This sequence in the N-terminal section; belongs to the BMP lipoprotein family. In the C-terminal section; belongs to the G-protein coupled receptor 3 family. GABA-B receptor subfamily.

The protein localises to the membrane. In Dictyostelium discoideum (Social amoeba), this protein is Metabotropic glutamate receptor-like protein L (far1).